Consider the following 265-residue polypeptide: Orotidine 5'-phosphate decarboxylase (265 aa).

Substrate contacts are provided by residues aspartate 37, 59 to 61 (KTH), 91 to 100 (DRKFADIGNT), tyrosine 217, and arginine 235. Residue lysine 93 is the Proton donor of the active site.

It belongs to the OMP decarboxylase family.

It catalyses the reaction orotidine 5'-phosphate + H(+) = UMP + CO2. The protein operates within pyrimidine metabolism; UMP biosynthesis via de novo pathway; UMP from orotate: step 2/2. This is Orotidine 5'-phosphate decarboxylase (URA3) from Diutina rugosa (Yeast).